The chain runs to 599 residues: Sulfite reductase [NADPH] flavoprotein alpha-component (599 aa).

Positions 64–202 constitute a Flavodoxin-like domain; that stretch reads ITIISASQTG…AASEWRARVV (139 aa). FMN contacts are provided by residues 70–75, 117–120, and 153–162; these read SQTGNA, STQG, and LGDSSYEFFC. The region spanning 234–448 is the FAD-binding FR-type domain; sequence DAPLVASLSV…IEHNDNFRLP (215 aa). FAD is bound by residues threonine 322, alanine 356, 386–389, 404–406, tyrosine 410, and 419–422; these read RLYS, TVG, and GGAS. NADP(+) is bound by residues 519-520, 525-529, and aspartate 561; these read SR and KVYVQ. Position 599 (tyrosine 599) interacts with FAD.

It belongs to the NADPH-dependent sulphite reductase flavoprotein subunit CysJ family. In the N-terminal section; belongs to the flavodoxin family. The protein in the C-terminal section; belongs to the flavoprotein pyridine nucleotide cytochrome reductase family. In terms of assembly, alpha(8)-beta(8). The alpha component is a flavoprotein, the beta component is a hemoprotein. It depends on FAD as a cofactor. FMN is required as a cofactor.

It catalyses the reaction hydrogen sulfide + 3 NADP(+) + 3 H2O = sulfite + 3 NADPH + 4 H(+). The protein operates within sulfur metabolism; hydrogen sulfide biosynthesis; hydrogen sulfide from sulfite (NADPH route): step 1/1. Functionally, component of the sulfite reductase complex that catalyzes the 6-electron reduction of sulfite to sulfide. This is one of several activities required for the biosynthesis of L-cysteine from sulfate. The flavoprotein component catalyzes the electron flow from NADPH -&gt; FAD -&gt; FMN to the hemoprotein component. The polypeptide is Sulfite reductase [NADPH] flavoprotein alpha-component (Shigella boydii serotype 4 (strain Sb227)).